A 160-amino-acid polypeptide reads, in one-letter code: Ribosomal RNA large subunit methyltransferase H (160 aa).

S-adenosyl-L-methionine-binding residues include Leu76 and Gly108.

Belongs to the RNA methyltransferase RlmH family. As to quaternary structure, homodimer.

It is found in the cytoplasm. It carries out the reaction pseudouridine(1915) in 23S rRNA + S-adenosyl-L-methionine = N(3)-methylpseudouridine(1915) in 23S rRNA + S-adenosyl-L-homocysteine + H(+). In terms of biological role, specifically methylates the pseudouridine at position 1915 (m3Psi1915) in 23S rRNA. The sequence is that of Ribosomal RNA large subunit methyltransferase H from Nitrobacter hamburgensis (strain DSM 10229 / NCIMB 13809 / X14).